A 367-amino-acid chain; its full sequence is MSSNSFGKLFTVTTFGESHGPAIGCVIDGCPPGLALDAAEFAHDLQRRATGKSRHTSARREADEVEILSGVYEGLTTGTPIALLIRNTDQRSKDYANIGQQFRPGHADYSYWHKYGIRDPRGGGRSSARETTMRVAAGVVAKKWLAERFGVTVRGYLSQLGEITPAGFDWSAVKDNPFFWPHAAQVPELEAYMDALRKSGDSVGACVDVVADNVPPGWGEPIYGKLDGDLAAALMSINAVKGVEIGDGFASAVQKGTEHRDLLTPQGFASNHAGGILGGISTGQPVVASIVLKPTSSLRLPGPSLDTSGNVVEVVTTGRHDPCVGIRATPIAEAMVAMVLMDQALRHRAQCGDVGTITPRIPGQFDG.

NADP(+)-binding residues include Arg48 and Arg54. FMN contacts are provided by residues 125–127 (RSS), 238–239 (NA), Gly278, 293–297 (KPTSS), and Arg319.

It belongs to the chorismate synthase family. In terms of assembly, homotetramer. It depends on FMNH2 as a cofactor.

It catalyses the reaction 5-O-(1-carboxyvinyl)-3-phosphoshikimate = chorismate + phosphate. It participates in metabolic intermediate biosynthesis; chorismate biosynthesis; chorismate from D-erythrose 4-phosphate and phosphoenolpyruvate: step 7/7. Functionally, catalyzes the anti-1,4-elimination of the C-3 phosphate and the C-6 proR hydrogen from 5-enolpyruvylshikimate-3-phosphate (EPSP) to yield chorismate, which is the branch point compound that serves as the starting substrate for the three terminal pathways of aromatic amino acid biosynthesis. This reaction introduces a second double bond into the aromatic ring system. This is Chorismate synthase from Stenotrophomonas maltophilia (strain R551-3).